The primary structure comprises 1213 residues: Protein jagged-1b (1213 aa).

The signal sequence occupies residues 1 to 26 (MILRRSSVFSAFYLHAFLLCLRTTVS). Topologically, residues 27–1064 (DASGHFELEI…HQIPSPKTDY (1038 aa)) are extracellular. Asparagine 139 is a glycosylation site (N-linked (GlcNAc...) asparagine). Residues 182–226 (VTCLEHYYGFGCNKFCRPRDEFFGHYTCDQNGNKTCLEGWTGPDC) form the DSL domain. Intrachain disulfides connect cysteine 184-cysteine 193 and cysteine 197-cysteine 209. N-linked (GlcNAc...) asparagine glycosylation is present at asparagine 214. 39 disulfide bridges follow: cysteine 217/cysteine 226, cysteine 231/cysteine 242, cysteine 235/cysteine 248, cysteine 250/cysteine 259, cysteine 262/cysteine 273, cysteine 268/cysteine 279, cysteine 281/cysteine 290, cysteine 297/cysteine 309, cysteine 303/cysteine 319, cysteine 321/cysteine 330, cysteine 337/cysteine 348, cysteine 342/cysteine 357, cysteine 359/cysteine 368, cysteine 375/cysteine 386, cysteine 380/cysteine 395, cysteine 397/cysteine 406, cysteine 413/cysteine 424, cysteine 418/cysteine 433, cysteine 435/cysteine 444, cysteine 451/cysteine 461, cysteine 455/cysteine 470, cysteine 472/cysteine 481, cysteine 488/cysteine 499, cysteine 493/cysteine 508, cysteine 510/cysteine 519, cysteine 526/cysteine 537, cysteine 531/cysteine 546, cysteine 548/cysteine 557, cysteine 596/cysteine 612, cysteine 614/cysteine 623, cysteine 630/cysteine 641, cysteine 635/cysteine 650, cysteine 652/cysteine 661, cysteine 668/cysteine 679, cysteine 673/cysteine 688, cysteine 690/cysteine 699, cysteine 706/cysteine 717, cysteine 711/cysteine 726, and cysteine 728/cysteine 737. The 34-residue stretch at 227–260 (NTAICRQGCSTEHGSCKQPGGCKCLYGWQGPYCD) folds into the EGF-like 1 domain. The 31-residue stretch at 261 to 291 (KCIPHPGCVHGTCVEPWQCLCDTNWGGQLCD) folds into the EGF-like 2; atypical domain. EGF-like domains are found at residues 293 to 331 (DLNY…VNCE) and 333 to 369 (AEHA…TSCE). An EGF-like 5; calcium-binding domain is found at 371–407 (NVDDCTPNQCKHGGTCQDLVNGFKCACPPHWTGKTCQ). Residues 409–445 (DANECEDKPCVNAKSCHNLIGAYFCECLPGWSGQNCD) enclose the EGF-like 6; calcium-binding domain. The region spanning 447-482 (NINDCKGQCLNGGTCKDLVNGYRCLCPPGYTGEQCE) is the EGF-like 7; calcium-binding domain. In terms of domain architecture, EGF-like 8; calcium-binding spans 484 to 520 (DVDECASSPCLNGGRCQDEVNGFQCLCPAGFSGQLCQ). 2 consecutive EGF-like domains span residues 522 to 558 (DIDY…KNCS) and 592 to 624 (SSNV…TYCH). Residue asparagine 556 is glycosylated (N-linked (GlcNAc...) asparagine). The EGF-like 11; calcium-binding domain maps to 626–662 (NINDCESNPCRNGGTCIDKVNVYQCICADGWEGVHCE). The 37-residue stretch at 664–700 (NIDDCSLNPCLNKGACQDLVNDFYCECRNGWKGKTCH) folds into the EGF-like 12; calcium-binding domain. Residues 702-738 (RDSQCDEATCNNGGTCHDEGDTFKCRCSPGWEGATCN) form the EGF-like 13 domain. N-linked (GlcNAc...) asparagine glycosylation occurs at asparagine 742. Intrachain disulfides connect cysteine 745-cysteine 756, cysteine 750-cysteine 765, cysteine 767-cysteine 776, cysteine 783-cysteine 794, cysteine 788-cysteine 803, cysteine 805-cysteine 814, cysteine 821-cysteine 832, cysteine 826-cysteine 841, and cysteine 843-cysteine 852. The 32-residue stretch at 746–777 (LPNPCENGGTCVVNGDSFNCVCKEGWEGSTCT) folds into the EGF-like 14 domain. One can recognise an EGF-like 15; calcium-binding domain in the interval 779–815 (NTNDCNPHPCYNSGTCVDGENWYRCECAPGFAGPDCR). An EGF-like 16; calcium-binding domain is found at 817 to 853 (NINECQSSPCAFGSTCVDEINGYRCLCPPGRIGPDCQ). Positions 860–914 (CIANGQVTADGAKWEEDCNICQCQNGRIHCTMMWCGPKSCRIGKARGGCPASQSC) constitute a VWFC domain. The region spanning 918–956 (KEEQCFVKPCPSLGECWPSAPPPPSKCHASFSYQDDSCA) is the EGF-like 17 domain. N-linked (GlcNAc...) asparagine glycans are attached at residues asparagine 957, asparagine 988, and asparagine 1042. A helical membrane pass occupies residues 1065 to 1087 (LVPLLSSIFIVLWIFALASAFLW). Residues 1088 to 1213 (CIHRRRKQNT…QSLNRMEYIV (126 aa)) are Cytoplasmic-facing. The interval 1181–1202 (EERAPNKNPNWTNKQDNRDLET) is disordered.

It is found in the membrane. Its subcellular location is the cell membrane. Functionally, ligand for Notch receptors and involved in the mediation of Notch signaling. Seems to be involved in cell-fate decisions. This is Protein jagged-1b (jag1b) from Danio rerio (Zebrafish).